A 234-amino-acid chain; its full sequence is Phosphoribosylaminoimidazole-succinocarboxamide synthase (234 aa).

Belongs to the SAICAR synthetase family.

It carries out the reaction 5-amino-1-(5-phospho-D-ribosyl)imidazole-4-carboxylate + L-aspartate + ATP = (2S)-2-[5-amino-1-(5-phospho-beta-D-ribosyl)imidazole-4-carboxamido]succinate + ADP + phosphate + 2 H(+). It participates in purine metabolism; IMP biosynthesis via de novo pathway; 5-amino-1-(5-phospho-D-ribosyl)imidazole-4-carboxamide from 5-amino-1-(5-phospho-D-ribosyl)imidazole-4-carboxylate: step 1/2. The chain is Phosphoribosylaminoimidazole-succinocarboxamide synthase from Streptococcus agalactiae serotype V (strain ATCC BAA-611 / 2603 V/R).